A 199-amino-acid chain; its full sequence is MATLIFVDKDNEEPGSRLASKDGLKLGSGVKALDGKLQVSTPRVGKVFGAPGLPKASRKALGTVNRVTEKPVKSSKPLQSKQPTLSVKKITEKSTKTQGSAPAPDDAYPEIEKFFPFDPLDFESFDLPEEHQISLLPLNGVPLMILNEERGLEKLLHLDPPSPLQKPFLPWESDPLPSPPSALSALDVELPPVCYDADI.

2 disordered regions span residues 1 to 23 (MATL…SKDG) and 58 to 108 (RKAL…DDAY). Position 2 is an N-acetylalanine (alanine 2). Over residues 7 to 23 (VDKDNEEPGSRLASKDG) the composition is skewed to basic and acidic residues. The D-box motif lies at 58 to 61 (RKAL). A TEK-box 1 motif is present at residues 68 to 70 (TEK). A compositionally biased stretch (polar residues) spans 76 to 85 (KPLQSKQPTL). Positions 91–93 (TEK) match the TEK-box 2 motif. Serine 162 bears the Phosphoserine mark. Residues 179–192 (PPSALSALDVELPP) carry the SH3-binding motif.

It belongs to the securin family. Interacts with the caspase-like ESPL1, and prevents its protease activity by covering its active site. Interacts with p53/TP53 and blocks its activity probably by blocking its binding to DNA. Interacts with the Ku 70 kDa subunit of ds-DNA kinase. Interacts with PTTG1IP. Interacts with RPS10 and DNAJA1. Phosphorylated at Ser-162 by CDK1 during mitosis. Post-translationally, phosphorylated in vitro by ds-DNA kinase. In terms of processing, ubiquitinated through 'Lys-11' linkage of ubiquitin moieties by the anaphase promoting complex (APC) at the onset of anaphase, conducting to its degradation. 'Lys-11'-linked ubiquitination is mediated by the E2 ligase UBE2C/UBCH10. In terms of tissue distribution, expressed at low level in most tissues, except in adult testis, where it is highly expressed. Expressed in both spermatocytes and spermatids.

The protein resides in the cytoplasm. It is found in the nucleus. Its function is as follows. Regulatory protein, which plays a central role in chromosome stability, in the p53/TP53 pathway, and DNA repair. Probably acts by blocking the action of key proteins. During the mitosis, it blocks Separase/ESPL1 function, preventing the proteolysis of the cohesin complex and the subsequent segregation of the chromosomes. At the onset of anaphase, it is ubiquitinated, conducting to its destruction and to the liberation of ESPL1. Its function is however not limited to a blocking activity, since it is required to activate ESPL1. Negatively regulates the transcriptional activity and related apoptosis activity of p53/TP53. The negative regulation of p53/TP53 may explain the strong transforming capability of the protein when it is overexpressed. May also play a role in DNA repair via its interaction with Ku, possibly by connecting DNA damage-response pathways with sister chromatid separation. This is Securin (Pttg1) from Rattus norvegicus (Rat).